The sequence spans 443 residues: Phosphoglucosamine mutase (443 aa).

The active-site Phosphoserine intermediate is Ser101. 4 residues coordinate Mg(2+): Ser101, Asp239, Asp241, and Asp243. The residue at position 101 (Ser101) is a Phosphoserine.

It belongs to the phosphohexose mutase family. Requires Mg(2+) as cofactor. Activated by phosphorylation.

The catalysed reaction is alpha-D-glucosamine 1-phosphate = D-glucosamine 6-phosphate. Catalyzes the conversion of glucosamine-6-phosphate to glucosamine-1-phosphate. The polypeptide is Phosphoglucosamine mutase (Francisella tularensis subsp. holarctica (strain FTNF002-00 / FTA)).